Consider the following 483-residue polypeptide: RNA-binding protein Nova-1 (483 aa).

A disordered region spans residues M1–T44. The Bipartite nuclear localization signal motif lies at K27–N43. KH domains are found at residues Q49–I116, I147–I213, and K397–I464. The interval G395–P479 is required for RNA binding.

Interacts with PTBP2; the interaction is direct.

It is found in the nucleus. Functions to regulate alternative splicing in neurons by binding pre-mRNA in a sequence-specific manner to activate exon inclusion or exclusion. It binds specifically to the sequences 5'-YCAY-3' and regulates splicing in only a subset of regulated exons. Binding to an exonic 5'-YCAY-3' cluster changes the protein complexes assembled on pre-mRNA, blocking U1 snRNP binding and exon inclusion, whereas binding to an intronic 5'-YCAY-3' cluster enhances spliceosome assembly and exon inclusion. Binding to 5'-YCAY-3' clusters results in a local and asymmetric action to regulate spliceosome assembly and alternative splicing in neurons. Binding to an exonic 5'-YCAY-3' cluster changed the protein complexes assembled on pre-mRNA, blocking U1 snRNP (small nuclear ribonucleoprotein) binding and exon inclusion, whereas binding to an intronic 5'-YCAY-3' cluster enhanced spliceosome assembly and exon inclusion. With NOVA1, they perform unique biological functions in different brain areas and cell types. Autoregulates its own expression by acting as a splicing repressor. Acts to activate the inclusion of exon E3A in the glycine receptor alpha-2 chain and of exon E9 in gamma-aminobutyric-acid receptor gamma-2 subunit via a distal downstream UCAU-rich intronic splicing enhancer. Acts to regulate a novel glycine receptor alpha-2 chain splice variant (alpha-2N) in developing spinal cord. This is RNA-binding protein Nova-1 (NOVA1) from Macaca fascicularis (Crab-eating macaque).